The chain runs to 201 residues: Recombination protein RecR (201 aa).

The C4-type zinc finger occupies 60–75; that stretch reads CKTCGNIDTQNPCTVC. The Toprim domain occupies 83 to 178; sequence AIIVVVADVA…KVTRLAHGVP (96 aa).

This sequence belongs to the RecR family.

Its function is as follows. May play a role in DNA repair. It seems to be involved in an RecBC-independent recombinational process of DNA repair. It may act with RecF and RecO. The sequence is that of Recombination protein RecR from Rhodopseudomonas palustris (strain BisA53).